The following is a 124-amino-acid chain: Putative iron-sulfur cluster insertion protein ErpA (124 aa).

Positions 52, 116, and 118 each coordinate iron-sulfur cluster.

This sequence belongs to the HesB/IscA family. In terms of assembly, homodimer. Iron-sulfur cluster serves as cofactor.

In terms of biological role, required for insertion of 4Fe-4S clusters. This is Putative iron-sulfur cluster insertion protein ErpA from Ralstonia nicotianae (strain ATCC BAA-1114 / GMI1000) (Ralstonia solanacearum).